Reading from the N-terminus, the 364-residue chain is PqqA peptide cyclase (364 aa).

Residues 6–222 (VGAPAGMLIE…HARTRYAGGP (217 aa)) form the Radical SAM core domain. [4Fe-4S] cluster-binding residues include Cys-20, Cys-24, and Cys-27.

It belongs to the radical SAM superfamily. PqqE family. In terms of assembly, interacts with PqqD. The interaction is necessary for activity of PqqE. The cofactor is [4Fe-4S] cluster.

It catalyses the reaction [PQQ precursor protein] + S-adenosyl-L-methionine = E-Y cross-linked-[PQQ precursor protein] + 5'-deoxyadenosine + L-methionine + H(+). It functions in the pathway cofactor biosynthesis; pyrroloquinoline quinone biosynthesis. In terms of biological role, catalyzes the cross-linking of a glutamate residue and a tyrosine residue in the PqqA protein as part of the biosynthesis of pyrroloquinoline quinone (PQQ). The polypeptide is PqqA peptide cyclase (Streptomyces rochei (Streptomyces parvullus)).